Reading from the N-terminus, the 149-residue chain is UPF0260 protein Psyr_1567 (149 aa).

This sequence belongs to the UPF0260 family.

In Pseudomonas syringae pv. syringae (strain B728a), this protein is UPF0260 protein Psyr_1567.